Here is a 401-residue protein sequence, read N- to C-terminus: Propionate kinase (401 aa).

The ATP site is built by Asn11 and Lys18. Asn11 is a binding site for Mg(2+). A substrate-binding site is contributed by Arg86. The active-site Proton donor/acceptor is the Asp143. Residues His175, 203–207 (HLGNG), 278–280 (DLR), and 326–330 (GIGEN) contribute to the ATP site.

It belongs to the acetokinase family. TdcD subfamily. As to quaternary structure, homodimer. The cofactor is Mg(2+).

It carries out the reaction propanoate + ATP = propanoyl phosphate + ADP. It functions in the pathway amino-acid degradation; L-threonine degradation via propanoate pathway; propanoate from L-threonine: step 4/4. Functionally, catalyzes the conversion of propionyl phosphate and ADP to propionate and ATP. The protein is Propionate kinase of Klebsiella pneumoniae (strain 342).